Reading from the N-terminus, the 110-residue chain is UPF0060 membrane protein Psyc_0916 (110 aa).

4 helical membrane-spanning segments follow: residues 7-27, 33-53, 63-83, and 87-107; these read VGLF…PYLW, SIWL…LLSL, AAYG…VNGI, and TWDI…MFAP.

It belongs to the UPF0060 family.

Its subcellular location is the cell inner membrane. In Psychrobacter arcticus (strain DSM 17307 / VKM B-2377 / 273-4), this protein is UPF0060 membrane protein Psyc_0916.